Consider the following 393-residue polypeptide: Cytochrome b (393 aa).

Transmembrane regions (helical) follow at residues 32 to 52, 76 to 98, 113 to 133, and 179 to 199; these read FGSL…FLAM, WLIR…LHIG, LWSI…LGYV, and FFSL…MHLL. Residues H82 and H96 each coordinate heme b. Residues H183 and H197 each contribute to the heme b site. H202 provides a ligand contact to a ubiquinone. 4 consecutive transmembrane segments (helical) span residues 225-245, 289-309, 321-341, and 348-368; these read FTFK…LFVF, LIGV…PILD, LMRF…FIGS, and YVEI…VVVP.

This sequence belongs to the cytochrome b family. As to quaternary structure, fungal cytochrome b-c1 complex contains 10 subunits; 3 respiratory subunits, 2 core proteins and 5 low-molecular weight proteins. Cytochrome b-c1 complex is a homodimer. It depends on heme b as a cofactor.

It is found in the mitochondrion inner membrane. In terms of biological role, component of the ubiquinol-cytochrome c reductase complex (complex III or cytochrome b-c1 complex) that is part of the mitochondrial respiratory chain. The b-c1 complex mediates electron transfer from ubiquinol to cytochrome c. Contributes to the generation of a proton gradient across the mitochondrial membrane that is then used for ATP synthesis. This Mycosarcoma maydis (Corn smut fungus) protein is Cytochrome b (COB).